We begin with the raw amino-acid sequence, 808 residues long: Probable inorganic carbon transporter subunit DabA (808 aa).

Zn(2+)-binding residues include Cys-335, Asp-337, His-497, and Cys-512.

Belongs to the inorganic carbon transporter (TC 9.A.2) DabA family. As to quaternary structure, forms a complex with DabB. It depends on Zn(2+) as a cofactor.

It localises to the cell inner membrane. Its function is as follows. Part of an energy-coupled inorganic carbon pump. The polypeptide is Probable inorganic carbon transporter subunit DabA (Rhodopseudomonas palustris (strain TIE-1)).